The primary structure comprises 512 residues: Cytochrome P450 26B1 (512 aa).

Residue cysteine 441 participates in heme binding.

The protein belongs to the cytochrome P450 family. Heme is required as a cofactor.

The protein localises to the endoplasmic reticulum membrane. Its subcellular location is the microsome membrane. It carries out the reaction all-trans-retinoate + reduced [NADPH--hemoprotein reductase] + O2 = all-trans-4-hydroxyretinoate + oxidized [NADPH--hemoprotein reductase] + H2O + H(+). It catalyses the reaction all-trans-retinoate + reduced [NADPH--hemoprotein reductase] + O2 = all-trans-18-hydroxyretinoate + oxidized [NADPH--hemoprotein reductase] + H2O + H(+). A cytochrome P450 monooxygenase involved in the metabolism of retinoates (RAs), the active metabolites of vitamin A, and critical signaling molecules in animals. RAs exist as at least four different isomers: all-trans-RA (atRA), 9-cis-RA, 13-cis-RA, and 9,13-dicis-RA, where atRA is considered to be the biologically active isomer, although 9-cis-RA and 13-cis-RA also have activity. Catalyzes the hydroxylation of atRA primarily at C-4 and C-18, thereby contributing to the regulation of atRA homeostasis and signaling. Hydroxylation of atRA limits its biological activity and initiates a degradative process leading to its eventual elimination. Involved in the convertion of atRA to all-trans-4-oxo-RA. Can oxidize all-trans-13,14-dihydroretinoate (DRA) to metabolites which could include all-trans-4-oxo-DRA, all-trans-4-hydroxy-DRA, all-trans-5,8-epoxy-DRA, and all-trans-18-hydroxy-DRA. Shows preference for the following substrates: atRA &gt; 9-cis-RA &gt; 13-cis-RA. Plays a central role in germ cell development: acts by degrading RAs in the developing testis, preventing STRA8 expression, thereby leading to delay of meiosis. Required for the maintenance of the undifferentiated state of male germ cells during embryonic development in Sertoli cells, inducing arrest in G0 phase of the cell cycle and preventing meiotic entry. Plays a role in skeletal development, both at the level of patterning and in the ossification of bone and the establishment of some synovial joints. Essential for postnatal survival. In terms of biological role, also has a significant activity in oxidation of tazarotenic acid and may therefore metabolize that xenobiotic in vivo. The protein is Cytochrome P450 26B1 (CYP26B1) of Bos taurus (Bovine).